An 802-amino-acid chain; its full sequence is Vacuolar membrane protease (802 aa).

Topologically, residues 1–13 (MARYNPLAFTSGP) are cytoplasmic. A helical transmembrane segment spans residues 14–34 (VVFFITITYTALLIALLLTHL). Residues 35–357 (TLPSYPSHPP…KVFIVFQLHT (323 aa)) lie on the Vacuolar side of the membrane. N-linked (GlcNAc...) asparagine glycans are attached at residues asparagine 48, asparagine 102, asparagine 105, and asparagine 112. Residues histidine 152 and aspartate 164 each contribute to the Zn(2+) site. Glutamate 198 functions as the Proton acceptor in the catalytic mechanism. Positions 199, 224, and 297 each coordinate Zn(2+). A helical transmembrane segment spans residues 358–378 (FFALCVTLLVVAPLTLIGLAW). The Cytoplasmic portion of the chain corresponds to 379–389 (SLHKADRNYLF). A helical transmembrane segment spans residues 390–409 (ARKAFVYSADDDEPIHLYGW). At 410–423 (RGFFRFPIAFGIAT) the chain is on the vacuolar side. Residues 424–444 (SIVVGLAMMLSAWFAVSWFLL) form a helical membrane-spanning segment. The Cytoplasmic portion of the chain corresponds to 445–457 (HGADAMRPSALQR). Residues 458 to 478 (MYSLLWLFIGSFCLLVFFTIL) form a helical membrane-spanning segment. Residues 479-490 (ANNHQVAAGYPS) are Vacuolar-facing. The helical transmembrane segment at 491-511 (LFCFATVFLANVLSFLELFLA) threads the bilayer. Residues 512 to 609 (PPKSAYAWNV…EQEWSGKLPS (98 aa)) are Cytoplasmic-facing. 2 disordered regions span residues 528–554 (GSRP…ATET) and 570–603 (AGRR…EQEW). Residues 610–630 (WIWIVQFSLLAPMIVILVGQI) traverse the membrane as a helical segment. At 631 to 649 (ALLLTSALYQTPSDGNSPL) the chain is on the vacuolar side. The helical transmembrane segment at 650 to 670 (YIYTSIAALAVFLVAPIGPFI) threads the bilayer. Residues 671 to 677 (HRFTHHV) are Cytoplasmic-facing. The helical transmembrane segment at 678–698 (PTFLFLLCVATTIYNLVAFPF) threads the bilayer. Over 699–802 (SEQHKLKVYF…HDDSNNRGRR (104 aa)) the chain is Vacuolar. N-linked (GlcNAc...) asparagine glycans are attached at residues asparagine 746 and asparagine 779.

Belongs to the peptidase M28 family. It depends on Zn(2+) as a cofactor.

The protein resides in the vacuole membrane. In terms of biological role, may be involved in vacuolar sorting and osmoregulation. The protein is Vacuolar membrane protease of Leptosphaeria maculans (strain JN3 / isolate v23.1.3 / race Av1-4-5-6-7-8) (Blackleg fungus).